A 262-amino-acid chain; its full sequence is Acyl-coenzyme A diphosphatase FITM2 (262 aa).

At 1–23 (MEHLERCAWVLRGTLVRAAVRRY) the chain is on the cytoplasmic side. The chain crosses the membrane as a helical span at residues 24–44 (LPWALAASMLAGSLLKELSPL). At 45-57 (PESYLSNKRNVLN) the chain is on the lumenal side. Residues 58–78 (VYFVKVAWAWTFCLLLPFIAL) traverse the membrane as a helical segment. Over 79-93 (TNYHLTGKAGLVLRR) the chain is Cytoplasmic. The helical transmembrane segment at 94 to 114 (LSTLLVGTAIWYVCTAIFSNV) threads the bilayer. Residues 115-145 (EHYTGSCYQSPALEGVRNEPLSKQQCHGQGG) are Lumenal-facing. A helical membrane pass occupies residues 146–166 (FWHGFDISGHSFLLTFCALMI). His155 is a catalytic residue. Residues 167 to 185 (VEEMAVLHEVKTDRSHCLH) are Cytoplasmic-facing. The helical transmembrane segment at 186–206 (VAITALVVALGFLTFIWVWMF) threads the bilayer. Residues 207–218 (LCTAVYFHNLSQ) lie on the Lumenal side of the membrane. Residue His214 is part of the active site. Residues 219 to 239 (KVFGTLFGLLGWYGTYGFWYL) traverse the membrane as a helical segment. The Cytoplasmic portion of the chain corresponds to 240-262 (KSFSPGLPPQSCSSNLKQDSYKR).

It belongs to the FIT family. FIT2 subfamily.

It is found in the endoplasmic reticulum membrane. It carries out the reaction an acyl-CoA + H2O = an acyl-4'-phosphopantetheine + adenosine 3',5'-bisphosphate + 2 H(+). The enzyme catalyses (9Z)-octadecenoyl-CoA + H2O = S-(9Z-octadecenoyl)-4'-phosphopantetheine + adenosine 3',5'-bisphosphate + 2 H(+). The catalysed reaction is (5Z,8Z,11Z,14Z)-eicosatetraenoyl-CoA + H2O = S-(5Z,8Z,11Z,14Z-eicosatetraenoyl)-4'-phosphopantetheine + adenosine 3',5'-bisphosphate + 2 H(+). It catalyses the reaction hexadecanoyl-CoA + H2O = S-hexadecanoyl-4'-phosphopantetheine + adenosine 3',5'-bisphosphate + 2 H(+). In terms of biological role, fatty acyl-coenzyme A (CoA) diphosphatase that hydrolyzes fatty acyl-CoA to yield acyl-4'-phosphopantetheine and adenosine 3',5'-bisphosphate. Preferentially hydrolyzes unsaturated long-chain acyl-CoA substrates such as oleoyl-CoA/(9Z)-octadecenoyl-CoA and arachidonoyl-CoA/(5Z,8Z,11Z,14Z)-eicosatetraenoyl-CoA in the endoplasmic reticulum (ER) lumen. This catalytic activity is required for maintaining ER structure and for lipid droplets (LDs) biogenesis, which are lipid storage organelles involved in maintaining lipid and energy homeostasis. Directly binds to diacylglycerol (DAGs) and triacylglycerol, which is also important for LD biogenesis. May support directional budding of nacent LDs from the ER into the cytosol by reducing DAG levels at sites of LD formation. Plays a role in the regulation of cell morphology and cytoskeletal organization. The protein is Acyl-coenzyme A diphosphatase FITM2 of Sus scrofa (Pig).